The following is a 287-amino-acid chain: Probable aquaporin PIP1-4 (287 aa).

Residue Met-1 is modified to N-acetylmethionine. The disordered stretch occupies residues 1 to 36 (MEGKEEDVRVGANKFPERQPIGTSAQSTDKDYKEPP). Residues 1 to 55 (MEGKEEDVRVGANKFPERQPIGTSAQSTDKDYKEPPPAPLFEPGELSSWSFYRAG) are Cytoplasmic-facing. The helical transmembrane segment at 56–76 (IAEFIATFLFLYITVLTVMGV) threads the bilayer. The Extracellular segment spans residues 77–92 (KRAPNMCASVGIQGIA). A helical membrane pass occupies residues 93–113 (WAFGGMIFALVYCTAGISGGH). Residues 114-133 (INPAVTFGLFLARKLSLTRA) lie on the Cytoplasmic side of the membrane. The NPA 1 signature appears at 115–117 (NPA). A helical transmembrane segment spans residues 134–154 (VFYMIMQCLGAICGAGVVKGF). Over 155–175 (QPTPYQTLGGGANTVAHGYTK) the chain is Extracellular. Residues 176–196 (GSGLGAEIIGTFVLVYTVFSA) form a helical membrane-spanning segment. Residues 197–209 (TDAKRSARDSHVP) lie on the Cytoplasmic side of the membrane. Residues 210 to 230 (ILAPLPIGFAVFLVHLATIPI) form a helical membrane-spanning segment. Residues 231–257 (TGTGINPARSLGAAIIYNKDHSWDDHW) are Extracellular-facing. The NPA 2 motif lies at 236-238 (NPA). A helical transmembrane segment spans residues 258–278 (IFWVGPFIGAALAALYHQIVI). Residues 279-287 (RAIPFKSKS) are Cytoplasmic-facing. Ser-285 is modified (phosphoserine).

This sequence belongs to the MIP/aquaporin (TC 1.A.8) family. PIP (TC 1.A.8.11) subfamily. Predominantly expressed in roots and green siliques. Also expressed above ground and in flower buds.

Its subcellular location is the cell membrane. Functionally, aquaporins facilitate the transport of water and small neutral solutes across cell membranes. The sequence is that of Probable aquaporin PIP1-4 (PIP1.4) from Arabidopsis thaliana (Mouse-ear cress).